Reading from the N-terminus, the 223-residue chain is Chalcone--flavanone isomerase (223 aa).

Residues Thr-50, Asn-114, and Thr-191 each coordinate substrate.

It belongs to the chalcone isomerase family.

It carries out the reaction a chalcone = a flavanone.. Its pathway is secondary metabolite biosynthesis; flavonoid biosynthesis. Its function is as follows. Catalyzes the intramolecular cyclization of bicyclic chalcones into tricyclic (S)-flavanones. Responsible for the isomerization of 4,2',4',6'-tetrahydroxychalcone (also termed chalcone) into naringenin. The protein is Chalcone--flavanone isomerase (CHI) of Pisum sativum (Garden pea).